The following is a 72-amino-acid chain: MSNSMINPSIVNLLEKVDDRYSLVTITSKRSRQLIDGAKSLVDIDSTKPVTVAINEIHEGKITYKTVKEGIK.

The protein belongs to the RNA polymerase subunit omega family. As to quaternary structure, the RNAP catalytic core consists of 2 alpha, 1 beta, 1 beta' and 1 omega subunit. When a sigma factor is associated with the core the holoenzyme is formed, which can initiate transcription.

It carries out the reaction RNA(n) + a ribonucleoside 5'-triphosphate = RNA(n+1) + diphosphate. In terms of biological role, promotes RNA polymerase assembly. Latches the N- and C-terminal regions of the beta' subunit thereby facilitating its interaction with the beta and alpha subunits. This Clostridium botulinum (strain Loch Maree / Type A3) protein is DNA-directed RNA polymerase subunit omega.